The following is a 140-amino-acid chain: Putative pre-16S rRNA nuclease (140 aa).

Belongs to the YqgF nuclease family.

It localises to the cytoplasm. Functionally, could be a nuclease involved in processing of the 5'-end of pre-16S rRNA. The polypeptide is Putative pre-16S rRNA nuclease (Mycoplasma pneumoniae (strain ATCC 29342 / M129 / Subtype 1) (Mycoplasmoides pneumoniae)).